A 544-amino-acid chain; its full sequence is Chaperonin GroEL 2 (544 aa).

ATP contacts are provided by residues 29-32 (TLGP), 86-90 (DGTTT), Gly413, 482-484 (NVL), and Asp498.

It belongs to the chaperonin (HSP60) family. Forms a cylinder of 14 subunits composed of two heptameric rings stacked back-to-back. Interacts with the co-chaperonin GroES.

It localises to the cytoplasm. It catalyses the reaction ATP + H2O + a folded polypeptide = ADP + phosphate + an unfolded polypeptide.. Its function is as follows. Together with its co-chaperonin GroES, plays an essential role in assisting protein folding. The GroEL-GroES system forms a nano-cage that allows encapsulation of the non-native substrate proteins and provides a physical environment optimized to promote and accelerate protein folding. The chain is Chaperonin GroEL 2 from Roseiflexus sp. (strain RS-1).